Reading from the N-terminus, the 66-residue chain is Small ribosomal subunit protein eS27 (66 aa).

Zn(2+)-binding residues include C21, C24, C40, and C43. The C4-type zinc finger occupies 21 to 43 (CPNCGNEQTVFSHATFPVRCLSC).

This sequence belongs to the eukaryotic ribosomal protein eS27 family. In terms of assembly, part of the 30S ribosomal subunit. The cofactor is Zn(2+).

This is Small ribosomal subunit protein eS27 from Sulfurisphaera tokodaii (strain DSM 16993 / JCM 10545 / NBRC 100140 / 7) (Sulfolobus tokodaii).